The chain runs to 118 residues: DNA-binding protein Msm_0708 (118 aa).

The segment at 16–39 (EARQAAAQGQMQQQAQQQMQQQEA) is disordered. The segment covering 18–39 (RQAAAQGQMQQQAQQQMQQQEA) has biased composition (low complexity).

Belongs to the PDCD5 family.

This Methanobrevibacter smithii (strain ATCC 35061 / DSM 861 / OCM 144 / PS) protein is DNA-binding protein Msm_0708.